We begin with the raw amino-acid sequence, 400 residues long: Argininosuccinate synthase (400 aa).

8-16 (AYSGGLDTS) serves as a coordination point for ATP. Residue Y87 coordinates L-citrulline. G117 contacts ATP. L-aspartate-binding residues include T119, N123, and D124. Residue N123 coordinates L-citrulline. Positions 127, 175, 260, and 272 each coordinate L-citrulline.

The protein belongs to the argininosuccinate synthase family. Type 1 subfamily. Homotetramer.

The protein localises to the cytoplasm. It catalyses the reaction L-citrulline + L-aspartate + ATP = 2-(N(omega)-L-arginino)succinate + AMP + diphosphate + H(+). It functions in the pathway amino-acid biosynthesis; L-arginine biosynthesis; L-arginine from L-ornithine and carbamoyl phosphate: step 2/3. The protein is Argininosuccinate synthase of Mycolicibacterium vanbaalenii (strain DSM 7251 / JCM 13017 / BCRC 16820 / KCTC 9966 / NRRL B-24157 / PYR-1) (Mycobacterium vanbaalenii).